We begin with the raw amino-acid sequence, 425 residues long: Ribulose bisphosphate carboxylase (425 aa).

The Proton acceptor role is filled by lysine 153. Lysine 155 is a binding site for substrate. Lysine 179, aspartate 181, and glutamate 182 together coordinate Mg(2+). Lysine 179 bears the N6-carboxylysine mark. Histidine 269 functions as the Proton acceptor in the catalytic mechanism. Residues arginine 270, histidine 302, 353 to 355, and 375 to 378 contribute to the substrate site; these read SGG and QAGG.

Belongs to the RuBisCO large chain family. Type III subfamily. As to quaternary structure, homodimer. In contrast to form I RuBisCO, the form III RuBisCO is composed solely of large subunits. Requires Mg(2+) as cofactor.

It catalyses the reaction 2 (2R)-3-phosphoglycerate + 2 H(+) = D-ribulose 1,5-bisphosphate + CO2 + H2O. The enzyme catalyses D-ribulose 1,5-bisphosphate + O2 = 2-phosphoglycolate + (2R)-3-phosphoglycerate + 2 H(+). With respect to regulation, reversibly inhibited by O(2). In terms of biological role, catalyzes the addition of molecular CO(2) and H(2)O to ribulose 1,5-bisphosphate (RuBP), generating two molecules of 3-phosphoglycerate (3-PGA). Functions in an archaeal AMP degradation pathway, together with AMP phosphorylase and R15P isomerase. The chain is Ribulose bisphosphate carboxylase from Methanocaldococcus jannaschii (strain ATCC 43067 / DSM 2661 / JAL-1 / JCM 10045 / NBRC 100440) (Methanococcus jannaschii).